Here is a 541-residue protein sequence, read N- to C-terminus: Glutamine-dependent NAD(+) synthetase (541 aa).

One can recognise a CN hydrolase domain in the interval F4–I243. E44 acts as the Proton acceptor; for glutaminase activity in catalysis. K111 (for glutaminase activity) is an active-site residue. Y117 is a binding site for L-glutamine. C147 serves as the catalytic Nucleophile; for glutaminase activity. L-glutamine contacts are provided by S173 and K179. G286 to S293 is a binding site for ATP. Residue N369 participates in deamido-NAD(+) binding. T393 lines the ATP pocket. 2 residues coordinate deamido-NAD(+): E398 and K510.

In the C-terminal section; belongs to the NAD synthetase family.

The catalysed reaction is deamido-NAD(+) + L-glutamine + ATP + H2O = L-glutamate + AMP + diphosphate + NAD(+) + H(+). It participates in cofactor biosynthesis; NAD(+) biosynthesis; NAD(+) from deamido-NAD(+) (L-Gln route): step 1/1. Functionally, catalyzes the ATP-dependent amidation of deamido-NAD to form NAD. Uses L-glutamine as a nitrogen source. In vitro, can also use ammonia as donor with comparable specific activity, but cannot use nicotinate mononucleotide (NaMN) as substrate. The sequence is that of Glutamine-dependent NAD(+) synthetase from Acinetobacter baylyi (strain ATCC 33305 / BD413 / ADP1).